Reading from the N-terminus, the 416-residue chain is 1-deoxy-D-xylulose 5-phosphate reductoisomerase (416 aa).

NADPH-binding residues include T10, G11, S12, I13, G36, R37, N38, and N130. Residue K131 participates in 1-deoxy-D-xylulose 5-phosphate binding. E132 lines the NADPH pocket. D156 provides a ligand contact to Mn(2+). 1-deoxy-D-xylulose 5-phosphate contacts are provided by S157, E158, S194, and H217. Residue E158 participates in Mn(2+) binding. NADPH is bound at residue G223. The 1-deoxy-D-xylulose 5-phosphate site is built by S230, N235, K236, and E239. Residue E239 coordinates Mn(2+).

The protein belongs to the DXR family. Mg(2+) is required as a cofactor. Mn(2+) serves as cofactor.

It carries out the reaction 2-C-methyl-D-erythritol 4-phosphate + NADP(+) = 1-deoxy-D-xylulose 5-phosphate + NADPH + H(+). Its pathway is isoprenoid biosynthesis; isopentenyl diphosphate biosynthesis via DXP pathway; isopentenyl diphosphate from 1-deoxy-D-xylulose 5-phosphate: step 1/6. In terms of biological role, catalyzes the NADPH-dependent rearrangement and reduction of 1-deoxy-D-xylulose-5-phosphate (DXP) to 2-C-methyl-D-erythritol 4-phosphate (MEP). The chain is 1-deoxy-D-xylulose 5-phosphate reductoisomerase from Synechococcus sp. (strain CC9311).